The chain runs to 562 residues: Putative transport protein ETA_21820 (562 aa).

The next 5 membrane-spanning stretches (helical) occupy residues 8–28 (LLIG…LCLG), 32–52 (LGSV…LLGQ), 66–86 (FMLF…SIFF), 94–114 (MLAI…GKLF), and 158–178 (HLSL…IFGA). RCK C-terminal domains are found at residues 202-288 (LDPD…SFRN) and 290-373 (KEVF…RIGF). The next 6 helical transmembrane spans lie at 383 to 403 (LLAF…TFQF), 406 to 426 (FNFG…LGFL), 440 to 460 (ALTM…GLSA), 473 to 493 (LLML…CFLF), 503 to 523 (ALLF…EIIS), and 540 to 560 (AIAN…WPIL).

This sequence belongs to the AAE transporter (TC 2.A.81) family. YbjL subfamily.

It localises to the cell membrane. The sequence is that of Putative transport protein ETA_21820 from Erwinia tasmaniensis (strain DSM 17950 / CFBP 7177 / CIP 109463 / NCPPB 4357 / Et1/99).